A 210-amino-acid chain; its full sequence is Large ribosomal subunit protein uL3 (210 aa).

The interval 131-155 (GPMSHGSKYHRRVGSMSATTDPGRT) is disordered.

It belongs to the universal ribosomal protein uL3 family. In terms of assembly, part of the 50S ribosomal subunit. Forms a cluster with proteins L14 and L19.

Functionally, one of the primary rRNA binding proteins, it binds directly near the 3'-end of the 23S rRNA, where it nucleates assembly of the 50S subunit. The sequence is that of Large ribosomal subunit protein uL3 from Thermoanaerobacter sp. (strain X514).